The following is a 477-amino-acid chain: Adenylyl cyclase-associated protein 2 (477 aa).

At Ala-2 the chain carries N-acetylalanine. 2 disordered regions span residues 224–261 (VLSSGPGLPPPPPPPPPPGPPPLLENEGKKEESSPSRS) and 274–323 (TKGL…KHAP). A compositionally biased stretch (pro residues) spans 230 to 246 (GLPPPPPPPPPPGPPPL). Phosphoserine occurs at positions 301 and 309. Over residues 301-320 (SPTKSHTPSPTSPKSYPSQK) the composition is skewed to low complexity. The region spanning 317–455 (PSQKHAPVLE…QDGDYREFPI (139 aa)) is the C-CAP/cofactor C-like domain.

The protein belongs to the CAP family.

It localises to the cell membrane. Functionally, involved in the regulation of actin polymerization. This Pongo abelii (Sumatran orangutan) protein is Adenylyl cyclase-associated protein 2 (CAP2).